A 404-amino-acid chain; its full sequence is CCA-adding enzyme (404 aa).

Residues glycine 27 and arginine 30 each contribute to the ATP site. 2 residues coordinate CTP: glycine 27 and arginine 30. Aspartate 40 and aspartate 42 together coordinate Mg(2+). ATP is bound by residues arginine 111, aspartate 154, arginine 157, arginine 160, and arginine 163. Positions 111, 154, 157, 160, and 163 each coordinate CTP.

Belongs to the tRNA nucleotidyltransferase/poly(A) polymerase family. Bacterial CCA-adding enzyme type 3 subfamily. Homodimer. The cofactor is Mg(2+).

The catalysed reaction is a tRNA precursor + 2 CTP + ATP = a tRNA with a 3' CCA end + 3 diphosphate. It carries out the reaction a tRNA with a 3' CCA end + 2 CTP + ATP = a tRNA with a 3' CCACCA end + 3 diphosphate. Catalyzes the addition and repair of the essential 3'-terminal CCA sequence in tRNAs without using a nucleic acid template. Adds these three nucleotides in the order of C, C, and A to the tRNA nucleotide-73, using CTP and ATP as substrates and producing inorganic pyrophosphate. tRNA 3'-terminal CCA addition is required both for tRNA processing and repair. Also involved in tRNA surveillance by mediating tandem CCA addition to generate a CCACCA at the 3' terminus of unstable tRNAs. While stable tRNAs receive only 3'-terminal CCA, unstable tRNAs are marked with CCACCA and rapidly degraded. This Geobacillus thermodenitrificans (strain NG80-2) protein is CCA-adding enzyme.